We begin with the raw amino-acid sequence, 458 residues long: Bifunctional protein GlmU (458 aa).

The pyrophosphorylase stretch occupies residues 1-232 (MTSSLSVIIL…TFEIEGVNNR (232 aa)). UDP-N-acetyl-alpha-D-glucosamine contacts are provided by residues 10 to 13 (LAAG), K24, Q79, 84 to 85 (GT), 106 to 108 (YGD), G142, E157, N172, and N230. Residue D108 participates in Mg(2+) binding. N230 provides a ligand contact to Mg(2+). The linker stretch occupies residues 233–253 (QQLASLERTWQGKLVADLQEA). The N-acetyltransferase stretch occupies residues 254–458 (GVQFADPTRV…KNDFKRPTKK (205 aa)). Positions 336 and 354 each coordinate UDP-N-acetyl-alpha-D-glucosamine. H366 (proton acceptor) is an active-site residue. Residues Y369 and N380 each contribute to the UDP-N-acetyl-alpha-D-glucosamine site. Acetyl-CoA is bound by residues A383, 389–390 (NY), S408, A426, and R443.

This sequence in the N-terminal section; belongs to the N-acetylglucosamine-1-phosphate uridyltransferase family. It in the C-terminal section; belongs to the transferase hexapeptide repeat family. As to quaternary structure, homotrimer. The cofactor is Mg(2+).

It localises to the cytoplasm. The enzyme catalyses alpha-D-glucosamine 1-phosphate + acetyl-CoA = N-acetyl-alpha-D-glucosamine 1-phosphate + CoA + H(+). It carries out the reaction N-acetyl-alpha-D-glucosamine 1-phosphate + UTP + H(+) = UDP-N-acetyl-alpha-D-glucosamine + diphosphate. It functions in the pathway nucleotide-sugar biosynthesis; UDP-N-acetyl-alpha-D-glucosamine biosynthesis; N-acetyl-alpha-D-glucosamine 1-phosphate from alpha-D-glucosamine 6-phosphate (route II): step 2/2. Its pathway is nucleotide-sugar biosynthesis; UDP-N-acetyl-alpha-D-glucosamine biosynthesis; UDP-N-acetyl-alpha-D-glucosamine from N-acetyl-alpha-D-glucosamine 1-phosphate: step 1/1. The protein operates within bacterial outer membrane biogenesis; LPS lipid A biosynthesis. In terms of biological role, catalyzes the last two sequential reactions in the de novo biosynthetic pathway for UDP-N-acetylglucosamine (UDP-GlcNAc). The C-terminal domain catalyzes the transfer of acetyl group from acetyl coenzyme A to glucosamine-1-phosphate (GlcN-1-P) to produce N-acetylglucosamine-1-phosphate (GlcNAc-1-P), which is converted into UDP-GlcNAc by the transfer of uridine 5-monophosphate (from uridine 5-triphosphate), a reaction catalyzed by the N-terminal domain. This is Bifunctional protein GlmU from Psychrobacter cryohalolentis (strain ATCC BAA-1226 / DSM 17306 / VKM B-2378 / K5).